A 358-amino-acid chain; its full sequence is Putative hydrogenase expression/formation protein MJ0993 (358 aa).

3 residues coordinate Fe cation: Cys33, Cys61, and Cys64.

Belongs to the HypD family.

The sequence is that of Putative hydrogenase expression/formation protein MJ0993 from Methanocaldococcus jannaschii (strain ATCC 43067 / DSM 2661 / JAL-1 / JCM 10045 / NBRC 100440) (Methanococcus jannaschii).